The following is a 351-amino-acid chain: Nicotinate-nucleotide--dimethylbenzimidazole phosphoribosyltransferase (351 aa).

The active-site Proton acceptor is Glu-313.

The protein belongs to the CobT family.

It catalyses the reaction 5,6-dimethylbenzimidazole + nicotinate beta-D-ribonucleotide = alpha-ribazole 5'-phosphate + nicotinate + H(+). It participates in nucleoside biosynthesis; alpha-ribazole biosynthesis; alpha-ribazole from 5,6-dimethylbenzimidazole: step 1/2. In terms of biological role, catalyzes the synthesis of alpha-ribazole-5'-phosphate from nicotinate mononucleotide (NAMN) and 5,6-dimethylbenzimidazole (DMB). The sequence is that of Nicotinate-nucleotide--dimethylbenzimidazole phosphoribosyltransferase from Mycobacterium leprae (strain Br4923).